Reading from the N-terminus, the 217-residue chain is MRNFEKARVQMVEQLVHRGIHDTRVLEAMGTLAREKFIDEGFIEFAYDDTPLPIKNGQTISQPYMTAFMIASAHLGGGEHVLEIGTGSGYAAAIIAQIAGQIFTVERYSTLAEAAQQRFEDLGCDNIHVRTGDGSNGWPEEAPFDAIIVAAGAPEIPSPLKEQLKPGGRLIIPVGSMAGTQRLLCITRKSTEEFDEEDLGGVMFVPLVGNKAWPDMN.

Residue Ser-61 is part of the active site.

This sequence belongs to the methyltransferase superfamily. L-isoaspartyl/D-aspartyl protein methyltransferase family.

Its subcellular location is the cytoplasm. The enzyme catalyses [protein]-L-isoaspartate + S-adenosyl-L-methionine = [protein]-L-isoaspartate alpha-methyl ester + S-adenosyl-L-homocysteine. Catalyzes the methyl esterification of L-isoaspartyl residues in peptides and proteins that result from spontaneous decomposition of normal L-aspartyl and L-asparaginyl residues. It plays a role in the repair and/or degradation of damaged proteins. This chain is Protein-L-isoaspartate O-methyltransferase, found in Brucella anthropi (strain ATCC 49188 / DSM 6882 / CCUG 24695 / JCM 21032 / LMG 3331 / NBRC 15819 / NCTC 12168 / Alc 37) (Ochrobactrum anthropi).